The following is a 166-amino-acid chain: Phosphopantetheine adenylyltransferase (166 aa).

Thr9 contributes to the substrate binding site. ATP is bound by residues Thr9–Phe10 and His17. Residues Lys41, Leu78, and Arg92 each contribute to the substrate site. ATP is bound by residues Gly93–Arg95, Glu103, and His128–Lys134.

It belongs to the bacterial CoaD family. As to quaternary structure, homohexamer. Mg(2+) is required as a cofactor.

It is found in the cytoplasm. It catalyses the reaction (R)-4'-phosphopantetheine + ATP + H(+) = 3'-dephospho-CoA + diphosphate. It participates in cofactor biosynthesis; coenzyme A biosynthesis; CoA from (R)-pantothenate: step 4/5. Its function is as follows. Reversibly transfers an adenylyl group from ATP to 4'-phosphopantetheine, yielding dephospho-CoA (dPCoA) and pyrophosphate. The sequence is that of Phosphopantetheine adenylyltransferase from Roseobacter denitrificans (strain ATCC 33942 / OCh 114) (Erythrobacter sp. (strain OCh 114)).